A 112-amino-acid polypeptide reads, in one-letter code: UPF0060 membrane protein Arth_4238 (112 aa).

The next 4 membrane-spanning stretches (helical) occupy residues 7–27, 33–53, 62–82, and 88–108; these read ILLFVLAAAAEIGGAWLVWQA, EWWWAGLGVLALGVYGFAATL, ILAAYGGVFVAGSLAWGMVFD, and RWDIIGSVICLLGVAVIMFAP.

Belongs to the UPF0060 family.

It is found in the cell membrane. The polypeptide is UPF0060 membrane protein Arth_4238 (Arthrobacter sp. (strain FB24)).